The chain runs to 352 residues: Palmitoyltransferase PFA5 (352 aa).

2 helical membrane passes run 12 to 32 and 53 to 73; these read YWTI…GTWA and IGLI…WVLI. The DHHC domain occupies 114–164; that stretch reads VWCSNCQSLKVGRTKHSSHQGHCVPRFDHYCVWLGAVIGFKNYRLFVQFVF. The active-site S-palmitoyl cysteine intermediate is the Cys-144. 2 consecutive transmembrane segments (helical) span residues 159–179 and 195–215; these read FVQF…TISV and LIVL…LFVS.

This sequence belongs to the DHHC palmitoyltransferase family. PFA5 subfamily.

The protein localises to the membrane. It catalyses the reaction L-cysteinyl-[protein] + hexadecanoyl-CoA = S-hexadecanoyl-L-cysteinyl-[protein] + CoA. In Candida glabrata (strain ATCC 2001 / BCRC 20586 / JCM 3761 / NBRC 0622 / NRRL Y-65 / CBS 138) (Yeast), this protein is Palmitoyltransferase PFA5 (PFA5).